Here is an 884-residue protein sequence, read N- to C-terminus: Valine--tRNA ligase (884 aa).

Positions 47 to 57 (PNVTGALHIGH) match the 'HIGH' region motif. The 'KMSKS' region motif lies at 525-529 (KMSKS). Lysine 528 contacts ATP. A coiled-coil region spans residues 812–884 (AVDFEAELAR…QQRFRDAIGK (73 aa)).

It belongs to the class-I aminoacyl-tRNA synthetase family. ValS type 1 subfamily. As to quaternary structure, monomer.

The protein resides in the cytoplasm. It catalyses the reaction tRNA(Val) + L-valine + ATP = L-valyl-tRNA(Val) + AMP + diphosphate. In terms of biological role, catalyzes the attachment of valine to tRNA(Val). As ValRS can inadvertently accommodate and process structurally similar amino acids such as threonine, to avoid such errors, it has a 'posttransfer' editing activity that hydrolyzes mischarged Thr-tRNA(Val) in a tRNA-dependent manner. This chain is Valine--tRNA ligase, found in Nitratidesulfovibrio vulgaris (strain ATCC 29579 / DSM 644 / CCUG 34227 / NCIMB 8303 / VKM B-1760 / Hildenborough) (Desulfovibrio vulgaris).